We begin with the raw amino-acid sequence, 290 residues long: 4-diphosphocytidyl-2-C-methyl-D-erythritol kinase (290 aa).

The active site involves Lys-20. Pro-104–Ser-114 contacts ATP. Residue Asp-146 is part of the active site.

Belongs to the GHMP kinase family. IspE subfamily.

The catalysed reaction is 4-CDP-2-C-methyl-D-erythritol + ATP = 4-CDP-2-C-methyl-D-erythritol 2-phosphate + ADP + H(+). Its pathway is isoprenoid biosynthesis; isopentenyl diphosphate biosynthesis via DXP pathway; isopentenyl diphosphate from 1-deoxy-D-xylulose 5-phosphate: step 3/6. Its function is as follows. Catalyzes the phosphorylation of the position 2 hydroxy group of 4-diphosphocytidyl-2C-methyl-D-erythritol. This Shewanella frigidimarina (strain NCIMB 400) protein is 4-diphosphocytidyl-2-C-methyl-D-erythritol kinase.